Reading from the N-terminus, the 298-residue chain is Protein DR_1172 (298 aa).

3 LEA-like repeats span residues 48–117, 128–197, and 201–270; these read DAAQ…NVGQ, DQAK…DVAQ, and QGAQ…AGKQ. The segment covering 174-193 has biased composition (basic and acidic residues); sequence VQDVKADASKAADQAKDKAQ. A disordered region spans residues 174–298; it reads VQDVKADASK…MTGNTNTRKN (125 aa). The span at 194-208 shows a compositional bias: low complexity; it reads DVAQNVKQGAQQAAS. Residues 209-233 show a composition bias toward basic and acidic residues; it reads DAKDKVQDVKADASRAADQAKDKAQ. The span at 275–298 shows a compositional bias: low complexity; sequence GSTTNNAGTAGNTGMTGNTNTRKN.

This sequence belongs to the LEA type 1 family.

This is Protein DR_1172 from Deinococcus radiodurans (strain ATCC 13939 / DSM 20539 / JCM 16871 / CCUG 27074 / LMG 4051 / NBRC 15346 / NCIMB 9279 / VKM B-1422 / R1).